The primary structure comprises 1154 residues: Voltage-dependent calcium channel subunit alpha-2/delta-2 (1154 aa).

Residues 1 to 18 (MAVPARTCGASWPGPVRT) form the signal peptide. The interval 1–37 (MAVPARTCGASWPGPVRTARPWPGRGPRPCPDPRGPA) is disordered. At 19–1116 (ARPWPGRGPR…TEDTSDCGRG (1098 aa)) the chain is on the extracellular side. Over residues 24-34 (GRGPRPCPDPR) the composition is skewed to pro residues. A glycan (N-linked (GlcNAc...) asparagine) is linked at N205. The VWFA domain maps to 294-472 (DMVIIVDVSG…INTQEYLDVL (179 aa)). A divalent metal cation contacts are provided by D300, S302, and S304. An MIDAS-like motif motif is present at residues 300–304 (DVSGS). N-linked (GlcNAc...) asparagine glycosylation is found at N389, N421, N510, N543, N627, and N864. The cysteines at positions 446 and 1101 are disulfide-linked. The region spanning 488–577 (WTNVYEDALG…KPQTTNFREP (90 aa)) is the Cache domain. The chain crosses the membrane as a helical span at residues 1117-1137 (ASFPPSLGVLVSLQLLLLLGL). At 1138–1154 (PPRPQPQVHSFAASRHL) the chain is on the cytoplasmic side.

It belongs to the calcium channel subunit alpha-2/delta family. As to quaternary structure, dimer formed of alpha-2-2 and delta-2 chains; disulfide-linked. Voltage-dependent calcium channels are multisubunit complexes, consisting of alpha-1 (CACNA1), alpha-2 (CACNA2D), beta (CACNB) and delta (CACNA2D) subunits in a 1:1:1:1 ratio. Post-translationally, N-glycosylated. In terms of processing, may be proteolytically processed into subunits alpha-2-2 and delta-2 that are disulfide-linked. It is however unclear whether such cleavage really takes place in vivo and has a functional role. According to PubMed:11306709, it is processed, at least in vitro, while according to PubMed:17052222, it is only poorly processed in vivo. Predominantly expressed in brain in a restricted pattern. Also expressed at lower level in kidney and testis Not expressed in lung at any moment of development. In brain, it localizes to sections of P21 brain. Expressed at high level in the cerebellum, with moderate levels in medulla, pons, and striatum. Also expressed in cortex, hippocampus, habenula and nucleus reticularis thalami (nRT). Strongly expressed in cerebellar Purkinje cells.

Its subcellular location is the membrane. Functionally, the alpha-2/delta subunit of voltage-dependent calcium channels regulates calcium current density and activation/inactivation kinetics of the calcium channel. Acts as a regulatory subunit for P/Q-type calcium channel (CACNA1A), N-type (CACNA1B), L-type (CACNA1C OR CACNA1D) and possibly T-type (CACNA1G). This is Voltage-dependent calcium channel subunit alpha-2/delta-2 (Cacna2d2) from Mus musculus (Mouse).